Here is a 182-residue protein sequence, read N- to C-terminus: Large ribosomal subunit protein uL15 (182 aa).

The segment at 1-52 (MDLSSLRPAKGAVKNKKRIGRGPGSGNGTTAGKGNKGQQSRSGYTRPVSEGG) is disordered. Over residues 21–35 (RGPGSGNGTTAGKGN) the composition is skewed to gly residues.

The protein belongs to the universal ribosomal protein uL15 family. As to quaternary structure, part of the 50S ribosomal subunit.

Functionally, binds to the 23S rRNA. In Chlorobium phaeobacteroides (strain BS1), this protein is Large ribosomal subunit protein uL15.